We begin with the raw amino-acid sequence, 217 residues long: MOB kinase activator 3A (217 aa).

Zn(2+) contacts are provided by Cys-83, Cys-88, His-165, and His-170.

It belongs to the MOB1/phocein family.

May regulate the activity of kinases. This Pongo abelii (Sumatran orangutan) protein is MOB kinase activator 3A (MOB3A).